The following is a 364-amino-acid chain: Carbamoyl phosphate synthase small chain (364 aa).

2 CPSase regions span residues 1 to 167 (MKRQ…PSPG) and 1 to 171 (MKRQ…RGER). Residues serine 45, glycine 219, and glycine 221 each contribute to the L-glutamine site. The Glutamine amidotransferase type-1 domain maps to 171–358 (RIVLIDFGMK…LALIREFNKK (188 aa)). The active-site Nucleophile is the cysteine 246. Positions 247, 250, 288, 290, and 291 each coordinate L-glutamine. Residues histidine 331 and glutamate 333 contribute to the active site.

Belongs to the CarA family. Composed of two chains; the small (or glutamine) chain promotes the hydrolysis of glutamine to ammonia, which is used by the large (or ammonia) chain to synthesize carbamoyl phosphate. Tetramer of heterodimers (alpha,beta)4.

It carries out the reaction hydrogencarbonate + L-glutamine + 2 ATP + H2O = carbamoyl phosphate + L-glutamate + 2 ADP + phosphate + 2 H(+). It catalyses the reaction L-glutamine + H2O = L-glutamate + NH4(+). It functions in the pathway amino-acid biosynthesis; L-arginine biosynthesis; carbamoyl phosphate from bicarbonate: step 1/1. The protein operates within pyrimidine metabolism; UMP biosynthesis via de novo pathway; (S)-dihydroorotate from bicarbonate: step 1/3. Small subunit of the glutamine-dependent carbamoyl phosphate synthetase (CPSase). CPSase catalyzes the formation of carbamoyl phosphate from the ammonia moiety of glutamine, carbonate, and phosphate donated by ATP, constituting the first step of 2 biosynthetic pathways, one leading to arginine and/or urea and the other to pyrimidine nucleotides. The small subunit (glutamine amidotransferase) binds and cleaves glutamine to supply the large subunit with the substrate ammonia. The sequence is that of Carbamoyl phosphate synthase small chain from Bacillus caldolyticus.